The following is a 279-amino-acid chain: tRNA (carboxymethyluridine(34)-5-O)-methyltransferase (279 aa).

A disordered region spans residues 172-236 (KSKSKPKTKS…QQQDQEQERE (65 aa)). Over residues 200–229 (PKERSEYLQRWKEEQQRSKSLDDNDEKQQQ) the composition is skewed to basic and acidic residues.

Interacts with TRM112.

Its subcellular location is the cytoplasm. It localises to the nucleus. It catalyses the reaction 5-(carboxymethyl)uridine(34) in tRNA + S-adenosyl-L-methionine = 5-(2-methoxy-2-oxoethyl)uridine(34) in tRNA + S-adenosyl-L-homocysteine. In terms of biological role, required for the methylation of the wobble bases at position 34 in tRNA. Appears to have a role in stress-response. The polypeptide is tRNA (carboxymethyluridine(34)-5-O)-methyltransferase (TRM9) (Saccharomyces cerevisiae (strain ATCC 204508 / S288c) (Baker's yeast)).